Here is a 270-residue protein sequence, read N- to C-terminus: Lipopolysaccharide core biosynthesis glycosyltransferase LpsC (270 aa).

This sequence belongs to the glycosyltransferase 2 family. WaaE/KdtX subfamily.

It functions in the pathway bacterial outer membrane biogenesis; LPS core biosynthesis. This is Lipopolysaccharide core biosynthesis glycosyltransferase LpsC (lpsC) from Rhizobium meliloti (strain 1021) (Ensifer meliloti).